The sequence spans 651 residues: Intraflagellar transport protein 70A (651 aa).

7 TPR repeats span residues aspartate 8–serine 41, arginine 42–valine 75, proline 140–glutamine 173, aspartate 175–glutamate 207, valine 379–isoleucine 410, proline 411–histidine 443, and threonine 445–asparagine 478. Residues tyrosine 494 to aspartate 521 are a coiled coil. Residues cysteine 530 to lysine 563 form a TPR 8 repeat.

This sequence belongs to the TTC30/dfy-1/fleer family. Localizes to the cilia of many ciliated epithelial cell types including pronephric cells, olfactory placode, the brain ventricle and lateral line organs.

Its subcellular location is the cell projection. The protein resides in the cilium. Its function is as follows. Plays a role in anterograde intraflagellar transport (IFT), the process by which cilia precursors are transported from the base of the cilium to the site of their incorporation at the tip. Required for polyglutamylation of axonemal tubulin, which is a prerequisite for correct assembly of cilia and for normal cilia beat amplitude. Does not seem to be required for neuronal microtubule polyglutamylation. The sequence is that of Intraflagellar transport protein 70A (ift70a) from Danio rerio (Zebrafish).